A 430-amino-acid polypeptide reads, in one-letter code: 3-phosphoshikimate 1-carboxyvinyltransferase (430 aa).

Residues Lys23, Ser24, and Arg28 each coordinate 3-phosphoshikimate. Lys23 is a phosphoenolpyruvate binding site. Phosphoenolpyruvate-binding residues include Gly95 and Arg123. 3-phosphoshikimate-binding residues include Ser169, Gln171, Asp315, and Lys342. Phosphoenolpyruvate is bound at residue Gln171. The Proton acceptor role is filled by Asp315. Arg346 and Arg388 together coordinate phosphoenolpyruvate.

This sequence belongs to the EPSP synthase family. As to quaternary structure, monomer.

It localises to the cytoplasm. It catalyses the reaction 3-phosphoshikimate + phosphoenolpyruvate = 5-O-(1-carboxyvinyl)-3-phosphoshikimate + phosphate. It participates in metabolic intermediate biosynthesis; chorismate biosynthesis; chorismate from D-erythrose 4-phosphate and phosphoenolpyruvate: step 6/7. Catalyzes the transfer of the enolpyruvyl moiety of phosphoenolpyruvate (PEP) to the 5-hydroxyl of shikimate-3-phosphate (S3P) to produce enolpyruvyl shikimate-3-phosphate and inorganic phosphate. The protein is 3-phosphoshikimate 1-carboxyvinyltransferase of Streptococcus pyogenes serotype M1.